Consider the following 829-residue polypeptide: Exocyst complex component SEC10b (829 aa).

Residues 244–266 adopt a coiled-coil conformation; that stretch reads RGLEVAVANLQDYCNELENRLLS.

The protein belongs to the SEC10 family. As to quaternary structure, the exocyst complex is composed of SEC3, SEC5, SEC6, SEC8, SEC10, EXO70A1 and EXO84B. Interacts with EXO84B. Binds to EXO70E2. Expressed in seedlings, roots, leaves and flowers.

The protein localises to the cytoplasm. It localises to the cytosol. Its subcellular location is the secreted. It is found in the extracellular exosome. In terms of biological role, component of the exocyst complex involved in the docking of exocytic vesicles with fusion sites on the plasma membrane during regulated or polarized secretion. Involved in polarized cell growth and organ morphogenesis. During cytokinesis, involved in cell plate initiation, cell plate maturation and formation of new primary cell wall. The chain is Exocyst complex component SEC10b from Arabidopsis thaliana (Mouse-ear cress).